An 862-amino-acid polypeptide reads, in one-letter code: FAS1 domain-containing protein YLR001C (862 aa).

An N-terminal signal peptide occupies residues 1–23; the sequence is MNMAIQTIKYIFWLLPILGLTQA. Over 24–762 the chain is Vacuolar; sequence LLQNPGDDFP…KYHLRLPGIA (739 aa). In terms of domain architecture, FAS1 1 spans 34 to 162; it reads FSTVIDILSE…ASLQGINNLL (129 aa). Asn68, Asn112, Asn152, Asn200, Asn291, Asn333, Asn450, Asn521, Asn542, Asn569, Asn663, Asn679, and Asn688 each carry an N-linked (GlcNAc...) asparagine glycan. FAS1 domains are found at residues 463–604 and 606–744; these read PGDL…DQLD and PVDL…DKPI. Residues 763-783 form a helical membrane-spanning segment; sequence VGFGVIIGVTIAISLLFCIII. Residues 784 to 862 are Cytoplasmic-facing; the sequence is TRGGKVKDKN…QKGGRSVSTS (79 aa).

Its subcellular location is the vacuole membrane. This chain is FAS1 domain-containing protein YLR001C, found in Saccharomyces cerevisiae (strain ATCC 204508 / S288c) (Baker's yeast).